A 350-amino-acid polypeptide reads, in one-letter code: Hydroxymethylglutaryl-CoA synthase (350 aa).

D33 and V34 together coordinate (3S)-3-hydroxy-3-methylglutaryl-CoA. The active-site Proton donor/acceptor is E85. Positions 117 and 158 each coordinate (3S)-3-hydroxy-3-methylglutaryl-CoA. Residue C117 is the Acyl-thioester intermediate of the active site. R204 is a CoA binding site. (3S)-3-hydroxy-3-methylglutaryl-CoA contacts are provided by T206 and H239. H239 serves as the catalytic Proton donor/acceptor. A CoA-binding site is contributed by K244. (3S)-3-hydroxy-3-methylglutaryl-CoA contacts are provided by K248, N271, and S301.

Belongs to the thiolase-like superfamily. Archaeal HMG-CoA synthase family. Interacts with acetoacetyl-CoA thiolase that catalyzes the precedent step in the pathway and with a DUF35 protein. The acetoacetyl-CoA thiolase/HMG-CoA synthase complex channels the intermediate via a fused CoA-binding site, which allows for efficient coupling of the endergonic thiolase reaction with the exergonic HMGCS reaction.

The enzyme catalyses acetoacetyl-CoA + acetyl-CoA + H2O = (3S)-3-hydroxy-3-methylglutaryl-CoA + CoA + H(+). Its pathway is metabolic intermediate biosynthesis; (R)-mevalonate biosynthesis; (R)-mevalonate from acetyl-CoA: step 2/3. Its function is as follows. Catalyzes the condensation of acetyl-CoA with acetoacetyl-CoA to form 3-hydroxy-3-methylglutaryl-CoA (HMG-CoA). Functions in the mevalonate (MVA) pathway leading to isopentenyl diphosphate (IPP), a key precursor for the biosynthesis of isoprenoid compounds that are building blocks of archaeal membrane lipids. In Methanopyrus kandleri (strain AV19 / DSM 6324 / JCM 9639 / NBRC 100938), this protein is Hydroxymethylglutaryl-CoA synthase.